The sequence spans 104 residues: Large ribosomal subunit protein eL36 (104 aa).

This sequence belongs to the eukaryotic ribosomal protein eL36 family.

This Tetrahymena thermophila (strain SB210) protein is Large ribosomal subunit protein eL36 (RPL36).